The primary structure comprises 439 residues: MRLSLDSFRAGLHPGSTYRVAFSGGLDSAVLLDLMCQVRRVSGIGVRAIHVHHGIQPEADAWSRHCAAVADRYGVALDILQIDGRSRPGDSPEAAARTARYHSLEASLDPGDILVTAQHLDDQAETLLLQLLRGAGLAGLAAMPNAVPFGAGILHRPLLRFGRRDILAYAQERGLSWIEDPSNRDERYDRNFIRRRILPQLAGRWPAVAANLTRSAGHCAEAAGLLDRLADTLMAAATAADEPGTLVLEIVQRLQPDEQRLLLRRWIHKRGLRAPPAKLLERIRKEVVETAGDRTPMIAWAEGTVRRYRHRLHLLPPSADFDASWTAAWSGETPLTLAGNGCLHAALCPGPGIDPDKWRSGRITVRYRRAGDRLEPAGRRGHHELKKLFQEAGLPPWLRDRQPIVCIDGRIASVGGSQWLASEFAGAPERVNIVVHWTP.

23–28 is an ATP binding site; it reads SGGLDS.

The protein belongs to the tRNA(Ile)-lysidine synthase family.

The protein localises to the cytoplasm. The catalysed reaction is cytidine(34) in tRNA(Ile2) + L-lysine + ATP = lysidine(34) in tRNA(Ile2) + AMP + diphosphate + H(+). In terms of biological role, ligates lysine onto the cytidine present at position 34 of the AUA codon-specific tRNA(Ile) that contains the anticodon CAU, in an ATP-dependent manner. Cytidine is converted to lysidine, thus changing the amino acid specificity of the tRNA from methionine to isoleucine. This chain is tRNA(Ile)-lysidine synthase, found in Methylococcus capsulatus (strain ATCC 33009 / NCIMB 11132 / Bath).